Here is a 121-residue protein sequence, read N- to C-terminus: Group 1 truncated hemoglobin (121 aa).

An N-acetylmethionine modification is found at Met1. Heme is bound at residue His73.

Belongs to the truncated hemoglobin family. Group I subfamily. In terms of assembly, monomer. Requires heme as cofactor.

The chain is Group 1 truncated hemoglobin from Tetrahymena pyriformis.